The chain runs to 1335 residues: MTVSDAPTPHIHLPDGSCCQPKKFAHLHQHTQYSLLDGAAKLKDLLKWAKEVTPEGQTPALAMTDHGNMHGAVHFYNYAMGMEVKPIIGYEAYVVPGFGTRRDRSRAQDGEKGIFHLTLLARDFEGYQNLCRLSSRGYTEGYYYKPRIDHELLQEHHKGIIAFSGCLGSEVQQLLMQGREDDARARLLWYRELFGDNYFIEIQDHGLPEQKKNNPILKAWAQELGIGMVATNDGHYVKKSDATAHETLLAIQTKATLADENRFKFPCDEFYVKNLEEMQRALPVSEWGEEPFDNTAHIAELCNVELPVGKKRQYQMPQLPIPEGRSMAEELRVQTYAGAVKRYPAHLTEGLLRDYAARSLAELGEADAARVLKRTGGCDSASCDLDTLYTLLAFLGSEWEARGKEAGEKYTPYPALEKMEQDGESGTLPAYAHADCRAARRQDSDTSIELDPDTDDEETTRSHHRYALKLLRRAEYELSVINNMGFPDYFLIVADYINWAKDHDISVGPGRGSGAGSLVAYAIRITNLDPLEFELLFERFLNPDRISMPDFDIDFNDARRTEVIGYVQEKYGTDKVAQIATFGTMASKACLKDVARVMGLEYAKVDKVSKLIPIKFGKSYSLEQAREAVPDIQQMLAEDAQLLEAYEFAQKLEGLTRHASVHAAGVVIGREELTNLVPVMRDTSGEGQVCQYDMKSVEDIGLIKMDFLGLRTLSFLDEAKRILRESGTDFEEKYGDFDHIPFDDEKTYELMSRGDTKGVFQLEGAGIADASRRLKPRRLADIIALSALYRPGPMENIPTYVRRHHGIEEVDYDKDGFPNSKQWLEKILQETYGIPVYQEQIMQIASEVAGYSLGGADLLRRAMGKKDAEEMKRQRQLFVVGAKEKGVPEDEGNKLFDMLDAFANYGFNKSHSAAYGVITYQTAWLKANYPVQFMAALLTVERRDSDKVAEYVSDARKMDLHVLPPDINRSSSDFAVAGEEILFGLYAIKGLGESAVLRILEEREKAGAFKSLADFCSRLGNKVCNRKALESLIKSGAFDAFGERHQLIESLEDALEDAAGTAEINARAQSGMSMMFGMEEVKKERPLRSSIAPYSDLERLAIEKEALGLYISGHPLEQHEGLREAASCRVSDLDAWFALQNVAPGKRQKAVLAGMIEGVVKKPTKSGGMMARFILADESGQMELVAFSRAYDRIEPKLVNDTPALVIVELEAEDGGLRAIAEEIVSIEQLSEVPKVMYVTIDLETASPDALGDFQSVLDEYAGSMPTYLRLETPEQFVVYQLDHGMGSPEAIRALNQTFAWADAHLAYDQQTILGRFAPKPPAWMNRQQGGGMRA.

Positions 442 to 461 (QDSDTSIELDPDTDDEETTR) are disordered. A compositionally biased stretch (acidic residues) spans 446–458 (TSIELDPDTDDEE).

This sequence belongs to the DNA polymerase type-C family. DnaE subfamily. As to quaternary structure, DNA polymerase III contains a core (composed of alpha, epsilon and theta chains) that associates with a tau subunit. This core dimerizes to form the PolIII' complex. PolIII' associates with the gamma complex (composed of gamma, delta, delta', psi and chi chains) and with the beta chain to form the complete DNA polymerase III complex.

It localises to the cytoplasm. The enzyme catalyses DNA(n) + a 2'-deoxyribonucleoside 5'-triphosphate = DNA(n+1) + diphosphate. Its function is as follows. DNA polymerase III is a complex, multichain enzyme responsible for most of the replicative DNA synthesis in bacteria as well as the bulk of DNA synthesis/repair after ionizing radiation (IR). The alpha chain is the catalytic subunit. Following severe irradiation (7 kGy of gamma irradiation) genomic DNA is fragmented. DNA is progressively degraded for the first 1.5 hours after IR, in a step promoted by RecA and counterbalanced by DNA Pol I and Pol III, followed by massive DNA synthesis and genome reassembly in the next hour. Optimal priming of DNA synthesis requires both RecA and RadA, Pol III initiates DNA synthesis while both Pol I and Pol III are required for its continuation. This DNA polymerase also exhibits 3' to 5' exonuclease activity. The sequence is that of DNA polymerase III subunit alpha (dnaE) from Deinococcus radiodurans (strain ATCC 13939 / DSM 20539 / JCM 16871 / CCUG 27074 / LMG 4051 / NBRC 15346 / NCIMB 9279 / VKM B-1422 / R1).